Reading from the N-terminus, the 91-residue chain is MFQSILMIVLVVMSISLFVCFIRTLIGPTMSDRIVALDTFGINLIGFIGVIMMLQETLAYSEVVLVISILAFIGSIALSKFIERGVVFDRG.

3 helical membrane passes run 5–27 (ILMI…TLIG), 34–53 (IVAL…VIMM), and 63–82 (VVLV…SKFI).

Belongs to the CPA3 antiporters (TC 2.A.63) subunit F family. Forms a heterooligomeric complex that consists of seven subunits: MrpA, MrpB, MrpC, MrpD, MrpE, MrpF and MrpG.

The protein localises to the cell membrane. In terms of biological role, mnh complex is a Na(+)Li(+)/H(+) antiporter involved in Na(+) and/or Li(+) excretion and Na(+) resistance. Na(+)/H(+) antiport consumes a transmembrane electrical potential, and is thus inferred to be electrogenic. Does not transport K(+), Ca(2+) or Mg(2+). This chain is Na(+)/H(+) antiporter subunit F (mrpF), found in Alkalihalophilus pseudofirmus (strain ATCC BAA-2126 / JCM 17055 / OF4) (Bacillus pseudofirmus).